We begin with the raw amino-acid sequence, 186 residues long: Large ribosomal subunit protein uL6 (186 aa).

It belongs to the universal ribosomal protein uL6 family. Part of the 50S ribosomal subunit.

Functionally, this protein binds to the 23S rRNA, and is important in its secondary structure. It is located near the subunit interface in the base of the L7/L12 stalk, and near the tRNA binding site of the peptidyltransferase center. This chain is Large ribosomal subunit protein uL6, found in Sulfurisphaera tokodaii (strain DSM 16993 / JCM 10545 / NBRC 100140 / 7) (Sulfolobus tokodaii).